Here is a 213-residue protein sequence, read N- to C-terminus: ATP-dependent Clp protease proteolytic subunit (213 aa).

Ser114 serves as the catalytic Nucleophile. His139 is a catalytic residue.

It belongs to the peptidase S14 family. As to quaternary structure, fourteen ClpP subunits assemble into 2 heptameric rings which stack back to back to give a disk-like structure with a central cavity, resembling the structure of eukaryotic proteasomes.

The protein localises to the cytoplasm. It carries out the reaction Hydrolysis of proteins to small peptides in the presence of ATP and magnesium. alpha-casein is the usual test substrate. In the absence of ATP, only oligopeptides shorter than five residues are hydrolyzed (such as succinyl-Leu-Tyr-|-NHMec, and Leu-Tyr-Leu-|-Tyr-Trp, in which cleavage of the -Tyr-|-Leu- and -Tyr-|-Trp bonds also occurs).. Its function is as follows. Cleaves peptides in various proteins in a process that requires ATP hydrolysis. Has a chymotrypsin-like activity. Plays a major role in the degradation of misfolded proteins. This chain is ATP-dependent Clp protease proteolytic subunit, found in Pseudomonas entomophila (strain L48).